The sequence spans 550 residues: Cytochrome P450 monooxygenase FFUJ_09176 (550 aa).

The first 31 residues, 1–31 (MLQTIPMPSRELTIALAVLSLLMVLVQRAGS), serve as a signal peptide directing secretion. Basic and acidic residues predominate over residues 430 to 441 (FIPERFEGDTRS). The disordered stretch occupies residues 430–451 (FIPERFEGDTRSSQESAASPDV). Position 466 (Cys-466) interacts with heme.

Belongs to the cytochrome P450 family.

Its function is as follows. Cytochrome P450 monooxygenase; part of the DMATS1 gene cluster that mediates the biosynthesis of a reversely N-prenylated monomeric L-tryptophan (r-N-DMAT). Seems not to contribute to the final DMATS1 product. The sequence is that of Cytochrome P450 monooxygenase FFUJ_09176 from Gibberella fujikuroi (strain CBS 195.34 / IMI 58289 / NRRL A-6831) (Bakanae and foot rot disease fungus).